A 552-amino-acid chain; its full sequence is Protein FAM234A (552 aa).

At M1–T48 the chain is on the cytoplasmic side. The helical; Signal-anchor for type II membrane protein transmembrane segment at A49–I69 threads the bilayer. Topologically, residues P70–A552 are extracellular. Residues N115, N238, and N473 are each glycosylated (N-linked (GlcNAc...) asparagine).

It belongs to the FAM234 family.

The protein localises to the membrane. In Bos taurus (Bovine), this protein is Protein FAM234A (FAM234A).